The chain runs to 548 residues: Membrane protein insertase YidC (548 aa).

A helical transmembrane segment spans residues Asn6–Asp26. The disordered stretch occupies residues Asn28 to Gly56. Residues Pro29–Thr42 are compositionally biased toward low complexity. Helical transmembrane passes span Phe350 to Tyr370, Phe424 to Ile444, Leu458 to Ile478, and Pro499 to Val519.

The protein belongs to the OXA1/ALB3/YidC family. Type 1 subfamily. Interacts with the Sec translocase complex via SecD. Specifically interacts with transmembrane segments of nascent integral membrane proteins during membrane integration.

The protein localises to the cell inner membrane. Functionally, required for the insertion and/or proper folding and/or complex formation of integral membrane proteins into the membrane. Involved in integration of membrane proteins that insert both dependently and independently of the Sec translocase complex, as well as at least some lipoproteins. Aids folding of multispanning membrane proteins. The polypeptide is Membrane protein insertase YidC (Salmonella enteritidis PT4 (strain P125109)).